We begin with the raw amino-acid sequence, 437 residues long: Enolase 2 (437 aa).

Gln162 is a binding site for (2R)-2-phosphoglycerate. Glu204 serves as the catalytic Proton donor. Mg(2+) is bound by residues Asp251, Glu297, and Asp324. The (2R)-2-phosphoglycerate site is built by Lys349, Arg378, Ser379, and Lys400. The active-site Proton acceptor is the Lys349.

Belongs to the enolase family. It depends on Mg(2+) as a cofactor.

It localises to the cytoplasm. Its subcellular location is the secreted. The protein localises to the cell surface. It carries out the reaction (2R)-2-phosphoglycerate = phosphoenolpyruvate + H2O. The protein operates within carbohydrate degradation; glycolysis; pyruvate from D-glyceraldehyde 3-phosphate: step 4/5. In terms of biological role, catalyzes the reversible conversion of 2-phosphoglycerate (2-PG) into phosphoenolpyruvate (PEP). It is essential for the degradation of carbohydrates via glycolysis. This is Enolase 2 from Chlorobaculum tepidum (strain ATCC 49652 / DSM 12025 / NBRC 103806 / TLS) (Chlorobium tepidum).